Reading from the N-terminus, the 197-residue chain is Probable calcium-binding protein CML21 (197 aa).

The disordered stretch occupies residues 1-33; that stretch reads MLRPPPPSSVLTASAAAARPPASVVQPQRQAAH. Residues 9 to 30 show a composition bias toward low complexity; sequence SVLTASAAAARPPASVVQPQRQ. 3 consecutive EF-hand domains span residues 37–72, 126–161, and 164–197; these read AETLRLRRVFEMFDRDGDGVITPAELSGALCRLGAR, EKEADMREAFGVFDEDGDGYISAAELQAVLSRMGLP, and ACMARVRDMIAAADRDSDGRVDYEEFKAMMAAGN. The Ca(2+) site is built by aspartate 50, aspartate 52, aspartate 54, glutamate 61, aspartate 139, aspartate 141, aspartate 143, tyrosine 145, glutamate 150, aspartate 177, aspartate 179, aspartate 181, arginine 183, and glutamate 188.

Functionally, potential calcium sensor. This chain is Probable calcium-binding protein CML21 (CML21), found in Oryza sativa subsp. japonica (Rice).